Reading from the N-terminus, the 694-residue chain is LMBR1 domain-containing protein 2 homolog (694 aa).

The Extracellular portion of the chain corresponds to 1-3 (MAY). A helical membrane pass occupies residues 4 to 26 (LLSFGIVAALFLASISLYRYGNI). Residues 27 to 30 (PRQH) are Cytoplasmic-facing. Residues 31 to 51 (ILVTLSVLTAWCFSFLIVFTI) form a helical membrane-spanning segment. Over 52–106 (PLDVTSTLYRQCVEEHRPTPAPNVTNTSSATVGPPPQCQEPWGMVPASVFPNLWR) the chain is Extracellular. N-linked (GlcNAc...) asparagine glycosylation is found at Asn-74 and Asn-77. The helical transmembrane segment at 107 to 127 (IIYWSSQFLTWLIMPLMQSYL) threads the bilayer. Residues 128 to 144 (KAGDFTVKGKLKSALIE) are Cytoplasmic-facing. A helical membrane pass occupies residues 145–165 (NAIYYGSYLFICGVLLIYIAV). Residues 166-181 (KGESLDWQKLKAIASS) are Extracellular-facing. Residues 182–202 (ASNTWGLFLLILLLGYALVEV) traverse the membrane as a helical segment. The Cytoplasmic portion of the chain corresponds to 203 to 381 (PRSLWNNAKP…ECLLKAPFLK (179 aa)). Residues 222–249 (KAAKLSTEKAEAEEHVDDILESLQGLSR) adopt a coiled-coil conformation. The chain crosses the membrane as a helical span at residues 382–402 (TMCVLTATMSAMVVWSELTFF). Residues 403 to 426 (SRHPVLSIFANVIYVAKESYDFFT) are Extracellular-facing. A helical membrane pass occupies residues 427–447 (IEVFSMVVLCYFFYCTYSTIL). Over 448-467 (RIRFLNLYYLAPHHQTNEHS) the chain is Cytoplasmic. Residues 468 to 488 (LIFSGMLLCRLTPPMCLNFLG) form a helical membrane-spanning segment. Over 489–514 (LIHMDTHIIPNRIMETVYTQIMGHMD) the chain is Extracellular. Residues 515–535 (VIGIISNGFNIYFPMCMLAFC) form a helical membrane-spanning segment. At 536–694 (LATWFSLGSR…PPPRGLFDDV (159 aa)) the chain is on the cytoplasmic side. Residues 564–592 (ELVQEGKDLIAREKRRRQRAEEAMARRRD) are a coiled coil. The disordered stretch occupies residues 673-694 (DYEAETDGRIVGPPPRGLFDDV).

This sequence belongs to the LIMR family.

The protein resides in the membrane. This is LMBR1 domain-containing protein 2 homolog from Drosophila melanogaster (Fruit fly).